The chain runs to 486 residues: mRNA cap guanine-N(7) methyltransferase (486 aa).

The disordered stretch occupies residues 1 to 92 (MAGGADLDEP…ADRKAARERA (92 aa)). Basic and acidic residues-rich tracts occupy residues 9-28 (EPPR…DSTH), 35-54 (VPRD…EPAR), and 82-92 (EADRKAARERA). An mRNA cap 0 methyltransferase domain is found at 135 to 486 (SRIKGLRSFN…FYVGFCFYKV (352 aa)). 144 to 145 (NN) is an mRNA binding site. S-adenosyl-L-methionine-binding positions include K148, G177, D201, D247, 281-283 (MFC), and Y286. Residues 333–351 (VEMKKKQAEAGDGSKKDDG) show a composition bias toward basic and acidic residues. The disordered stretch occupies residues 333–365 (VEMKKKQAEAGDGSKKDDGGDAEEGELDEPEVE). Residues 352-363 (GDAEEGELDEPE) are compositionally biased toward acidic residues.

It belongs to the class I-like SAM-binding methyltransferase superfamily. mRNA cap 0 methyltransferase family.

It localises to the nucleus. It carries out the reaction a 5'-end (5'-triphosphoguanosine)-ribonucleoside in mRNA + S-adenosyl-L-methionine = a 5'-end (N(7)-methyl 5'-triphosphoguanosine)-ribonucleoside in mRNA + S-adenosyl-L-homocysteine. Functionally, responsible for methylating the 5'-cap structure of mRNAs. The protein is mRNA cap guanine-N(7) methyltransferase (ABD1) of Pyricularia oryzae (strain 70-15 / ATCC MYA-4617 / FGSC 8958) (Rice blast fungus).